The primary structure comprises 211 residues: Protein-L-isoaspartate O-methyltransferase (211 aa).

The active site involves serine 60.

Belongs to the methyltransferase superfamily. L-isoaspartyl/D-aspartyl protein methyltransferase family.

It localises to the cytoplasm. It carries out the reaction [protein]-L-isoaspartate + S-adenosyl-L-methionine = [protein]-L-isoaspartate alpha-methyl ester + S-adenosyl-L-homocysteine. Catalyzes the methyl esterification of L-isoaspartyl residues in peptides and proteins that result from spontaneous decomposition of normal L-aspartyl and L-asparaginyl residues. It plays a role in the repair and/or degradation of damaged proteins. The sequence is that of Protein-L-isoaspartate O-methyltransferase from Pseudomonas fluorescens (strain Pf0-1).